A 249-amino-acid chain; its full sequence is 3-deoxy-D-manno-octulosonic acid kinase (249 aa).

Aspartate 175 is an active-site residue.

Belongs to the protein kinase superfamily. KdkA/RfaP family.

The protein resides in the cell inner membrane. It catalyses the reaction an alpha-Kdo-(2-&gt;6)-lipid IVA + ATP = a 4-O-phospho-alpha-Kdo-(2-&gt;6)-lipid IVA + ADP + H(+). The protein operates within bacterial outer membrane biogenesis; LPS core biosynthesis. Functionally, catalyzes the ATP-dependent phosphorylation of the 3-deoxy-D-manno-octulosonic acid (Kdo) residue in Kdo-lipid IV(A) at the 4-OH position. This chain is 3-deoxy-D-manno-octulosonic acid kinase, found in Xanthomonas oryzae pv. oryzae (strain PXO99A).